A 223-amino-acid chain; its full sequence is Phosphoenolpyruvate guanylyltransferase (223 aa).

Threonine 140, glycine 156, and serine 159 together coordinate phosphoenolpyruvate.

This sequence belongs to the CofC family.

The enzyme catalyses phosphoenolpyruvate + GTP + H(+) = enolpyruvoyl-2-diphospho-5'-guanosine + diphosphate. It functions in the pathway cofactor biosynthesis; coenzyme F420 biosynthesis. Its function is as follows. Guanylyltransferase that catalyzes the activation of phosphoenolpyruvate (PEP) as enolpyruvoyl-2-diphospho-5'-guanosine, via the condensation of PEP with GTP. It is involved in the biosynthesis of coenzyme F420, a hydride carrier cofactor. The chain is Phosphoenolpyruvate guanylyltransferase from Conexibacter woesei (strain DSM 14684 / CCUG 47730 / CIP 108061 / JCM 11494 / NBRC 100937 / ID131577).